The sequence spans 349 residues: D-alanine--D-alanine ligase (349 aa).

An ATP-grasp domain is found at 132-335 (KHVFEAVGVP…YSDLIEKLVD (204 aa)). ATP is bound at residue 162–217 (VEKLDFPVFVKPANMGSSVGISKVDDLADLQPALSEAYKYDNRVVIEQGVDAREIE). The Mg(2+) site is built by aspartate 289, glutamate 302, and asparagine 304.

Belongs to the D-alanine--D-alanine ligase family. Requires Mg(2+) as cofactor. It depends on Mn(2+) as a cofactor.

Its subcellular location is the cytoplasm. It carries out the reaction 2 D-alanine + ATP = D-alanyl-D-alanine + ADP + phosphate + H(+). It participates in cell wall biogenesis; peptidoglycan biosynthesis. In terms of biological role, cell wall formation. The sequence is that of D-alanine--D-alanine ligase from Lactococcus lactis subsp. cremoris (strain MG1363).